A 177-amino-acid chain; its full sequence is ATP-dependent protease subunit HslV (177 aa).

Residue T6 is part of the active site. Residues A162, C165, and T168 each coordinate Na(+).

Belongs to the peptidase T1B family. HslV subfamily. In terms of assembly, a double ring-shaped homohexamer of HslV is capped on each side by a ring-shaped HslU homohexamer. The assembly of the HslU/HslV complex is dependent on binding of ATP.

It localises to the cytoplasm. It catalyses the reaction ATP-dependent cleavage of peptide bonds with broad specificity.. With respect to regulation, allosterically activated by HslU binding. Its function is as follows. Protease subunit of a proteasome-like degradation complex believed to be a general protein degrading machinery. In Desulfovibrio desulfuricans (strain ATCC 27774 / DSM 6949 / MB), this protein is ATP-dependent protease subunit HslV.